The primary structure comprises 144 residues: Bombinins BLP-7/GH-2 (144 aa).

An N-terminal signal peptide occupies residues 1–18; sequence MNFKYIVAVSFLIASTYA. The propeptide occupies 19–43; that stretch reads RSVKNDEQSLSQRDVLEEESLREIR. Asn70 is subject to Asparagine amide. Positions 74-123 are excised as a propeptide; the sequence is TAEEHEVMKRLEAVMRDLDSLDYPEEASEMETRSFNQEEIANLFTKKEKR. Ile143 carries the post-translational modification Isoleucine amide.

It belongs to the bombinin family. In terms of tissue distribution, expressed by the skin glands.

It localises to the secreted. Functionally, antimicrobial peptide with activity against Gram-positive and -negative bacteria and fungi. Shows activity against P.acnes (MIC=5 uM), E.coli (MIC=5-6.3 uM), S.aureus (MIC=5-6.3 uM), M.luteus, S.cerevisiae and C.albicans (MIC=10-12.5 uM). Also reduces the production of interleukin (IL)-8 and granulocyte-macrophage colony stimulating factor (CSF2) in normal human epidermal keratinocytes (NHEKs). Shows anticancer activity against three human hepatoma cell lines. In vivo, using the rat ear edema model, suppress P.acnes-induced skin inflammation, significantly reducing the ear thickness. Shows weak hemolytic activity against human erythrocytes. Its function is as follows. Shows weak antimicrobial activity but high hemolytic activity. The chain is Bombinins BLP-7/GH-2 from Bombina orientalis (Oriental fire-bellied toad).